We begin with the raw amino-acid sequence, 219 residues long: Dehydration-responsive element-binding protein 1E (219 aa).

A compositionally biased stretch (low complexity) spans 1–19; sequence MEWAYYGSGYSSSGTPSPV. The disordered stretch occupies residues 1–44; that stretch reads MEWAYYGSGYSSSGTPSPVGGDGDEDSYMTVSSAPPKRRAGRTK. A DNA-binding region (AP2/ERF) is located at residues 52 to 109; sequence VYKGVRSRNPGRWVCEVREPHGKQRIWLGTFETAEMAARAHDVAAMALRGRAACLNFA.

Belongs to the AP2/ERF transcription factor family. ERF subfamily.

It is found in the nucleus. Functionally, transcriptional activator that binds specifically to the DNA sequence 5'-[AG]CCGAC-3'. Binding to the C-repeat/DRE element mediates high salinity- and dehydration-inducible transcription. This chain is Dehydration-responsive element-binding protein 1E (DREB1E), found in Oryza sativa subsp. indica (Rice).